The sequence spans 59 residues: Large ribosomal subunit protein bL32 (59 aa).

The segment at 1–59 (MAVQQNKKSPSKRGMHRAHDFLTTPPLAVESTTGEAHLRHHISPAGFYRGKKVTKGKGE) is disordered. Basic residues predominate over residues 49–59 (RGKKVTKGKGE).

It belongs to the bacterial ribosomal protein bL32 family.

This is Large ribosomal subunit protein bL32 from Dechloromonas aromatica (strain RCB).